A 213-amino-acid chain; its full sequence is Orotate phosphoribosyltransferase (213 aa).

Lysine 26 serves as a coordination point for 5-phospho-alpha-D-ribose 1-diphosphate. 34–35 (FF) contributes to the orotate binding site. 5-phospho-alpha-D-ribose 1-diphosphate-binding positions include 72 to 73 (YK), arginine 99, lysine 100, lysine 103, histidine 105, and 124 to 132 (DDVITAGTA). The orotate site is built by threonine 128 and arginine 156.

It belongs to the purine/pyrimidine phosphoribosyltransferase family. PyrE subfamily. As to quaternary structure, homodimer. It depends on Mg(2+) as a cofactor.

It catalyses the reaction orotidine 5'-phosphate + diphosphate = orotate + 5-phospho-alpha-D-ribose 1-diphosphate. The protein operates within pyrimidine metabolism; UMP biosynthesis via de novo pathway; UMP from orotate: step 1/2. Functionally, catalyzes the transfer of a ribosyl phosphate group from 5-phosphoribose 1-diphosphate to orotate, leading to the formation of orotidine monophosphate (OMP). This Shigella flexneri serotype 5b (strain 8401) protein is Orotate phosphoribosyltransferase.